We begin with the raw amino-acid sequence, 248 residues long: tRNA pseudouridine synthase A (248 aa).

The Nucleophile role is filled by aspartate 53. Tyrosine 111 contributes to the substrate binding site.

It belongs to the tRNA pseudouridine synthase TruA family. As to quaternary structure, homodimer.

It catalyses the reaction uridine(38/39/40) in tRNA = pseudouridine(38/39/40) in tRNA. Its function is as follows. Formation of pseudouridine at positions 38, 39 and 40 in the anticodon stem and loop of transfer RNAs. This is tRNA pseudouridine synthase A from Streptococcus thermophilus (strain CNRZ 1066).